The following is a 236-amino-acid chain: ATP synthase subunit a (236 aa).

Helical transmembrane passes span 18–38 (SNLL…VLCT), 80–100 (VTLL…AIVI), 112–132 (DPAI…YYGI), 179–199 (ILLS…IGAA), and 200–220 (IPML…AFIF).

The protein belongs to the ATPase A chain family. In terms of assembly, F-type ATPases have 2 components, CF(1) - the catalytic core - and CF(0) - the membrane proton channel. CF(1) has five subunits: alpha(3), beta(3), gamma(1), delta(1), epsilon(1). CF(0) has three main subunits: a(1), b(2) and c(9-12). The alpha and beta chains form an alternating ring which encloses part of the gamma chain. CF(1) is attached to CF(0) by a central stalk formed by the gamma and epsilon chains, while a peripheral stalk is formed by the delta and b chains.

Its subcellular location is the cell membrane. In terms of biological role, key component of the proton channel; it plays a direct role in the translocation of protons across the membrane. The sequence is that of ATP synthase subunit a from Priestia megaterium (strain ATCC 12872 / QMB1551) (Bacillus megaterium).